A 202-amino-acid polypeptide reads, in one-letter code: Protein cuti-1 (202 aa).

The Cytoplasmic portion of the chain corresponds to 1–37 (MPNDRVAPLPPNFVYSPHDKFYYAPATCNSMHYTTAS). Residues 38–58 (YISAFIEFLVMGTGAICFYVM) form a helical membrane-spanning segment. Residues 59–68 (SHKSDSIGKW) are Extracellular-facing. A helical membrane pass occupies residues 69–89 (LFYIQAGITVLSLLTSALMAF). Residues 90–107 (GLWKENPQMLGSKLKFIE) lie on the Cytoplasmic side of the membrane. Residues 108-128 (FIICFLLIWAVISIVCMAFGI) traverse the membrane as a helical segment. Residues 129-148 (QFTRQVFGIFGKVHRIEQDY) are Extracellular-facing. Residues 149–169 (GPIWPFNIAVVSFFTAAIAIW) form a helical membrane-spanning segment. Residues 170 to 202 (TRIIIQGAADYLYDKAYFADKQNVELRESSKTR) are Cytoplasmic-facing.

In terms of assembly, interacts with vps-39.

The protein localises to the cell membrane. It localises to the cytoplasm. Functionally, involved in cuticle formation and ensures cuticle shedding during larval development. Plays a role in maintaining the hypodermis. In association with vps-39, may play a role in vesicle tethering. This chain is Protein cuti-1, found in Caenorhabditis elegans.